The primary structure comprises 437 residues: Methionine aminopeptidase 2 (437 aa).

The interval 1–90 (MAAQAAPAEE…LFPNNQYPKG (90 aa)) is disordered. Basic and acidic residues predominate over residues 10–20 (ELSKLSVDETK). Positions 31–42 (SDAESGDEEAEE) are enriched in acidic residues. Residues 52–66 (AKKKKKRKPKKKKKA) are compositionally biased toward basic residues. A substrate-binding site is contributed by histidine 190. Residues aspartate 210, aspartate 221, and histidine 290 each contribute to the a divalent metal cation site. Histidine 298 serves as a coordination point for substrate. Positions 323 and 418 each coordinate a divalent metal cation.

Belongs to the peptidase M24A family. Methionine aminopeptidase eukaryotic type 2 subfamily. The cofactor is Co(2+). Zn(2+) serves as cofactor. Mn(2+) is required as a cofactor. Requires Fe(2+) as cofactor.

It localises to the cytoplasm. It catalyses the reaction Release of N-terminal amino acids, preferentially methionine, from peptides and arylamides.. Cotranslationally removes the N-terminal methionine from nascent proteins. The N-terminal methionine is often cleaved when the second residue in the primary sequence is small and uncharged (Met-Ala-, Cys, Gly, Pro, Ser, Thr, or Val). The chain is Methionine aminopeptidase 2 from Neurospora crassa (strain ATCC 24698 / 74-OR23-1A / CBS 708.71 / DSM 1257 / FGSC 987).